Here is a 507-residue protein sequence, read N- to C-terminus: Histone-lysine N-methyltransferase set-18 (507 aa).

Positions 49, 52, 65, 68, 74, 78, 86, and 90 each coordinate Zn(2+). Residues 49–90 (CANCLRGPAPGEKLLRCGGCNFSMYCSKECQATAWLVHKPEC) form an MYND-type zinc finger.

The protein belongs to the class V-like SAM-binding methyltransferase superfamily. Histone-lysine methyltransferase family. In terms of tissue distribution, expressed in pharyngeal and body wall muscles.

The catalysed reaction is L-lysyl(36)-[histone H3] + 2 S-adenosyl-L-methionine = N(6),N(6)-dimethyl-L-lysyl(36)-[histone H3] + 2 S-adenosyl-L-homocysteine + 2 H(+). Functionally, histone methyltransferase. Specifically methylates 'Lys-36' of histone H3, inducing di-methylation. Plays a role in modulating lifespan and oxidative stress resistance, in a manner dependent upon daf-16/Forkhead box protein O and the Insulin/IGF-1-like signaling (IIS) mediated pathway. Represses transcription of daf-16 isoform a, perhaps by methylating histone H3 at the daf-16 promoter, which in turn leads to recruitment of histone deacetylases and thus modulation of expression. This Caenorhabditis elegans protein is Histone-lysine N-methyltransferase set-18.